The following is a 208-amino-acid chain: NADH-ubiquinone oxidoreductase chain 4 (208 aa).

6 consecutive transmembrane segments (helical) span residues 23 to 43 (VWIN…VTLW), 60 to 80 (SLSS…LLAS), 93 to 113 (KMYI…FSAN), 114 to 134 (ELIM…IIIT), 147 to 167 (LYFL…LISI), and 188 to 208 (PTWS…IKMP).

Belongs to the complex I subunit 4 family. Core subunit of respiratory chain NADH dehydrogenase (Complex I) which is composed of 45 different subunits.

It localises to the mitochondrion inner membrane. The catalysed reaction is a ubiquinone + NADH + 5 H(+)(in) = a ubiquinol + NAD(+) + 4 H(+)(out). Its function is as follows. Core subunit of the mitochondrial membrane respiratory chain NADH dehydrogenase (Complex I) which catalyzes electron transfer from NADH through the respiratory chain, using ubiquinone as an electron acceptor. Essential for the catalytic activity and assembly of complex I. This chain is NADH-ubiquinone oxidoreductase chain 4 (MT-ND4), found in Phodopus sungorus (Striped hairy-footed hamster).